The following is a 337-amino-acid chain: Biotin synthase (337 aa).

The Radical SAM core domain maps to 58–283; sequence PEVEVEGIIS…RTILRFAGGR (226 aa). [4Fe-4S] cluster-binding residues include Cys-73, Cys-77, and Cys-80. [2Fe-2S] cluster contacts are provided by Cys-116, Cys-149, Cys-208, and Arg-278.

This sequence belongs to the radical SAM superfamily. Biotin synthase family. Homodimer. [4Fe-4S] cluster is required as a cofactor. The cofactor is [2Fe-2S] cluster.

The enzyme catalyses (4R,5S)-dethiobiotin + (sulfur carrier)-SH + 2 reduced [2Fe-2S]-[ferredoxin] + 2 S-adenosyl-L-methionine = (sulfur carrier)-H + biotin + 2 5'-deoxyadenosine + 2 L-methionine + 2 oxidized [2Fe-2S]-[ferredoxin]. Its pathway is cofactor biosynthesis; biotin biosynthesis; biotin from 7,8-diaminononanoate: step 2/2. Catalyzes the conversion of dethiobiotin (DTB) to biotin by the insertion of a sulfur atom into dethiobiotin via a radical-based mechanism. The polypeptide is Biotin synthase (Rhodococcus jostii (strain RHA1)).